We begin with the raw amino-acid sequence, 205 residues long: Recombination protein RecR (205 aa).

A C4-type zinc finger spans residues C58–C75. One can recognise a Toprim domain in the interval R83–P182.

This sequence belongs to the RecR family.

Functionally, may play a role in DNA repair. It seems to be involved in an RecBC-independent recombinational process of DNA repair. It may act with RecF and RecO. The protein is Recombination protein RecR of Chloroherpeton thalassium (strain ATCC 35110 / GB-78).